Here is an 864-residue protein sequence, read N- to C-terminus: Structure-specific endonuclease subunit SLX4 (864 aa).

A compositionally biased stretch (low complexity) spans 35-54; the sequence is SPLSLPSPTSLLDFLSTSTS. Disordered stretches follow at residues 35 to 72, 89 to 113, 160 to 193, 288 to 318, 348 to 382, 413 to 432, and 625 to 771; these read SPLSLPSPTSLLDFLSTSTSRGPARSDTDGDKTQGKEV, VVSGTGGKAATGKKLKRRTESPGNA, KANQTVSLQPETKKSAPKGCNDTTQPAENGHIND, GLSDSRQSSITEDSESATSKPRRVKAKNPPK, LSDEPGKEKNVAKRTSGARYAKPGRKKSATTEKKN, ANGHSEDQHEQNEGTSHISN, and KTSN…ETLP. Basic and acidic residues predominate over residues 58 to 72; sequence ARSDTDGDKTQGKEV. Polar residues-rich tracts occupy residues 160-169 and 289-306; these read KANQTVSLQP and LSDSRQSSITEDSESATS. The segment covering 307–317 has biased composition (basic residues); the sequence is KPRRVKAKNPP. Residues 659–668 are compositionally biased toward polar residues; that stretch reads SIPQTATTQV. Residues 683 to 695 are compositionally biased toward low complexity; the sequence is VPVPSRRSTSTSK. Polar residues predominate over residues 743-771; it reads PESFNLPTTPLTIRSGKIPSTGTASETLP.

This sequence belongs to the SLX4 family. In terms of assembly, forms a heterodimer with SLX1. In terms of processing, phosphorylated in response to DNA damage.

The protein resides in the nucleus. Its function is as follows. Regulatory subunit of the SLX1-SLX4 structure-specific endonuclease that resolves DNA secondary structures generated during DNA repair and recombination. Has endonuclease activity towards branched DNA substrates, introducing single-strand cuts in duplex DNA close to junctions with ss-DNA. The protein is Structure-specific endonuclease subunit SLX4 of Paracoccidioides brasiliensis (strain Pb03).